We begin with the raw amino-acid sequence, 294 residues long: Protoheme IX farnesyltransferase (294 aa).

Transmembrane regions (helical) follow at residues 25–45, 48–68, 92–112, 115–135, 141–161, 170–190, 216–236, 240–260, and 272–292; these read SLVLVTAAGGMWLAPGHMGAV, LVTLLATAGTVGAANALNCYW, AVALWFGISLAAVSLPALALG, VLTAALGLVALLSYVLAYTPL, AAMLVGGVPGALPPLMGWTAV, FSLFAIMFLWQMPHFIAIALF, VVLYLVALIPMTLLPFQLHIA, YLAAAVLLGLSFLGLGAWGFF, and FFFSLIYLTGLFAALALDRVP.

It belongs to the UbiA prenyltransferase family. Protoheme IX farnesyltransferase subfamily.

The protein resides in the cell inner membrane. The enzyme catalyses heme b + (2E,6E)-farnesyl diphosphate + H2O = Fe(II)-heme o + diphosphate. It functions in the pathway porphyrin-containing compound metabolism; heme O biosynthesis; heme O from protoheme: step 1/1. Converts heme B (protoheme IX) to heme O by substitution of the vinyl group on carbon 2 of heme B porphyrin ring with a hydroxyethyl farnesyl side group. The protein is Protoheme IX farnesyltransferase of Myxococcus xanthus (strain DK1622).